We begin with the raw amino-acid sequence, 808 residues long: MAETAAGVGRFKTNYAVERKIEPFYKGGKAQLDQTGQHLFCVCGTRVNILEVASGAVLRSLEQEDQEDITAFDLSPDNEVLVTASRALLLAQWAWQEGSVTRLWKAIHTAPVATMAFDPTSTLLATGGCDGAVRVWDIVRHYGTHHFRGSPGVVHLVAFHPDPTRLLLFSSATDAAIRVWSLQDRSCLAVLTAHYSAVTSLAFSADGHTMLSSGRDKICIIWDLQSCQATRTVPVFESVEAAVLLPEEPVSQLGVKSPGLYFLTAGDQGTLRVWEAASGQCVYTQAQPPGPGQELTHCTLAHTAGVVLTATADHNLLLYEARSLRLQKQFAGYSEEVLDVRFLGPEDSHVVVASNSPCLKVFELQTSACQILHGHTDIVLALDVFRKGWLFASCAKDQSVRIWRMNKAGQVMCVAQGSGHTHSVGTVCCSRLKESFLVTGSQDCTVKLWPLPKALLSKNTAPDNGPILLQAQTTQRCHDKDINSVAIAPNDKLLATGSQDRTAKLWALPQCQLLGVFSGHRRGLWCVQFSPMDQVLATASADGTIKLWALQDFSCLKTFEGHDASVLKVAFVSRGTQLLSSGSDGLVKLWTIKNNECVRTLDAHEDKVWGLHCSRLDDHALTGASDSRVILWKDVTEAEQAEEQARQEEQVVRQQELDNLLHEKRYLRALGLAISLDRPHTVLTVIQAIRRDPEACEKLEATMLRLRRDQKEALLRFCVTWNTNSRHCHEAQAVLGVLLRREAPEELLAYEGVRAALEALLPYTERHFQRLSRTLQAAAFLDFLWHNMKLPVPAAAPTPWETHKGALP.

A2 bears the N-acetylalanine mark. WD repeat units lie at residues 64 to 105 (EDQE…RLWK), 107 to 146 (IHTAPVATMAFDPTSTLLATGGCDGAVRVWDIVRHYGTHH), 149 to 190 (GSPG…CLAV), 193 to 232 (AHYSAVTSLAFSADGHTMLSSGRDKICIIWDLQSCQATRT), 245 to 284 (LPEEPVSQLGVKSPGLYFLTAGDQGTLRVWEAASGQCVYT), 290 to 329 (GPGQELTHCTLAHTAGVVLTATADHNLLLYEARSLRLQKQ), 332 to 372 (GYSE…CQIL), 374 to 413 (GHTDIVLALDVFRKGWLFASCAKDQSVRIWRMNKAGQVMC), 419 to 459 (GHTH…LSKN), 477 to 516 (CHDKDINSVAIAPNDKLLATGSQDRTAKLWALPQCQLLGV), 519 to 560 (GHRR…KTFE), 562 to 602 (HDAS…RTLD), and 604 to 642 (HEDKVWGLHCSRLDDHALTGASDSRVILWKDVTEAEQAE). At S257 the chain carries Phosphoserine. A Glycyl lysine isopeptide (Lys-Gly) (interchain with G-Cter in SUMO2) cross-link involves residue K407.

As to quaternary structure, part of the small subunit (SSU) processome, composed of more than 70 proteins and the RNA chaperone small nucleolar RNA (snoRNA) U3.

It localises to the nucleus. The protein localises to the nucleolus. Functionally, part of the small subunit (SSU) processome, first precursor of the small eukaryotic ribosomal subunit. During the assembly of the SSU processome in the nucleolus, many ribosome biogenesis factors, an RNA chaperone and ribosomal proteins associate with the nascent pre-rRNA and work in concert to generate RNA folding, modifications, rearrangements and cleavage as well as targeted degradation of pre-ribosomal RNA by the RNA exosome. In Homo sapiens (Human), this protein is Transducin beta-like protein 3.